The primary structure comprises 644 residues: Exoribonuclease 2 (644 aa).

In terms of domain architecture, RNB spans 189–516 (REDLTALNFV…NHRLLKAMIT (328 aa)). The S1 motif domain occupies 561-643 (DTRFTAEIID…ETRNVIARPV (83 aa)).

The protein belongs to the RNR ribonuclease family. RNase II subfamily.

It is found in the cytoplasm. The catalysed reaction is Exonucleolytic cleavage in the 3'- to 5'-direction to yield nucleoside 5'-phosphates.. Involved in mRNA degradation. Hydrolyzes single-stranded polyribonucleotides processively in the 3' to 5' direction. This is Exoribonuclease 2 from Yersinia pseudotuberculosis serotype IB (strain PB1/+).